The primary structure comprises 330 residues: GTP 3',8-cyclase (330 aa).

The Radical SAM core domain maps to 14–225; the sequence is RFGRTVDYVR…RERLADAYPE (212 aa). Position 23 (Arg23) interacts with GTP. Residues Cys30 and Cys34 each coordinate [4Fe-4S] cluster. Tyr36 contributes to the S-adenosyl-L-methionine binding site. Cys37 is a binding site for [4Fe-4S] cluster. Residue Arg70 coordinates GTP. Gly74 is an S-adenosyl-L-methionine binding site. Residue Thr101 participates in GTP binding. Ser125 serves as a coordination point for S-adenosyl-L-methionine. Position 162 (Lys162) interacts with GTP. The [4Fe-4S] cluster site is built by Cys259 and Cys262. Residue 264-266 participates in GTP binding; it reads KLR. Cys276 contributes to the [4Fe-4S] cluster binding site. A compositionally biased stretch (basic and acidic residues) spans 309-318; the sequence is KPKDGLKSSH. The disordered stretch occupies residues 309 to 330; sequence KPKDGLKSSHDTAASSMSQIGG. Polar residues predominate over residues 319 to 330; it reads DTAASSMSQIGG.

It belongs to the radical SAM superfamily. MoaA family. As to quaternary structure, monomer and homodimer. It depends on [4Fe-4S] cluster as a cofactor.

It catalyses the reaction GTP + AH2 + S-adenosyl-L-methionine = (8S)-3',8-cyclo-7,8-dihydroguanosine 5'-triphosphate + 5'-deoxyadenosine + L-methionine + A + H(+). It functions in the pathway cofactor biosynthesis; molybdopterin biosynthesis. In terms of biological role, catalyzes the cyclization of GTP to (8S)-3',8-cyclo-7,8-dihydroguanosine 5'-triphosphate. This Chlorobaculum tepidum (strain ATCC 49652 / DSM 12025 / NBRC 103806 / TLS) (Chlorobium tepidum) protein is GTP 3',8-cyclase.